The chain runs to 822 residues: Endonuclease MutS2 (822 aa).

An ATP-binding site is contributed by 348–355 (GPNTGGKT). Residues 707 to 737 (SLNGKKVEPPPKSEPVPKKVKAEPPATEAKS) are disordered. Basic and acidic residues predominate over residues 709–728 (NGKKVEPPPKSEPVPKKVKA). The region spanning 749–822 (LDCRGDRLER…GAGVTIAYLR (74 aa)) is the Smr domain.

Belongs to the DNA mismatch repair MutS family. MutS2 subfamily. In terms of assembly, homodimer. Binds to stalled ribosomes, contacting rRNA.

Functionally, endonuclease that is involved in the suppression of homologous recombination and thus may have a key role in the control of bacterial genetic diversity. In terms of biological role, acts as a ribosome collision sensor, splitting the ribosome into its 2 subunits. Detects stalled/collided 70S ribosomes which it binds and splits by an ATP-hydrolysis driven conformational change. Acts upstream of the ribosome quality control system (RQC), a ribosome-associated complex that mediates the extraction of incompletely synthesized nascent chains from stalled ribosomes and their subsequent degradation. Probably generates substrates for RQC. The sequence is that of Endonuclease MutS2 from Synechocystis sp. (strain ATCC 27184 / PCC 6803 / Kazusa).